We begin with the raw amino-acid sequence, 228 residues long: Octanoyltransferase (228 aa).

Residues 31 to 212 enclose the BPL/LPL catalytic domain; that stretch reads GETDGILILL…KFSEVFGIHF (182 aa). Substrate-binding positions include 76 to 83, 143 to 145, and 156 to 158; these read RGGKITFH, AIG, and GIA. The active-site Acyl-thioester intermediate is cysteine 174.

It belongs to the LipB family.

It localises to the cytoplasm. The catalysed reaction is octanoyl-[ACP] + L-lysyl-[protein] = N(6)-octanoyl-L-lysyl-[protein] + holo-[ACP] + H(+). Its pathway is protein modification; protein lipoylation via endogenous pathway; protein N(6)-(lipoyl)lysine from octanoyl-[acyl-carrier-protein]: step 1/2. In terms of biological role, catalyzes the transfer of endogenously produced octanoic acid from octanoyl-acyl-carrier-protein onto the lipoyl domains of lipoate-dependent enzymes. Lipoyl-ACP can also act as a substrate although octanoyl-ACP is likely to be the physiological substrate. The chain is Octanoyltransferase from Thermoanaerobacter pseudethanolicus (strain ATCC 33223 / 39E) (Clostridium thermohydrosulfuricum).